Consider the following 177-residue polypeptide: ADP-ribosylation factor-like protein 17 (177 aa).

Gly-2 is lipidated: N-myristoyl glycine. GTP-binding positions include 24-31 (SLDTAGKT), 67-71 (DVGSH), and 125-128 (LPHS).

The protein belongs to the small GTPase superfamily. Arf family.

The protein localises to the golgi apparatus. GTP-binding protein that functions as an allosteric activator of the cholera toxin catalytic subunit, an ADP-ribosyltransferase. Involved in protein trafficking; may modulate vesicle budding and uncoating within the Golgi apparatus. This Homo sapiens (Human) protein is ADP-ribosylation factor-like protein 17 (ARL17A).